The sequence spans 205 residues: N-(5'-phosphoribosyl)anthranilate isomerase (205 aa).

It belongs to the TrpF family.

It catalyses the reaction N-(5-phospho-beta-D-ribosyl)anthranilate = 1-(2-carboxyphenylamino)-1-deoxy-D-ribulose 5-phosphate. It participates in amino-acid biosynthesis; L-tryptophan biosynthesis; L-tryptophan from chorismate: step 3/5. This chain is N-(5'-phosphoribosyl)anthranilate isomerase, found in Maridesulfovibrio salexigens (strain ATCC 14822 / DSM 2638 / NCIMB 8403 / VKM B-1763) (Desulfovibrio salexigens).